A 33-amino-acid polypeptide reads, in one-letter code: Photosystem II reaction center protein Psb30 (33 aa).

A helical transmembrane segment spans residues 5–25 (LIVQLTSLALITLAGPLIVAL).

Belongs to the Psb30/Ycf12 family. As to quaternary structure, PSII is composed of 1 copy each of membrane proteins PsbA, PsbB, PsbC, PsbD, PsbE, PsbF, PsbH, PsbI, PsbJ, PsbK, PsbL, PsbM, PsbT, PsbY, PsbZ, Psb30/Ycf12, peripheral proteins of the oxygen-evolving complex and a large number of cofactors. It forms dimeric complexes.

It is found in the plastid. The protein localises to the chloroplast thylakoid membrane. Functionally, a core subunit of photosystem II (PSII), probably helps stabilize the reaction center. The sequence is that of Photosystem II reaction center protein Psb30 from Euglena sanguinea.